We begin with the raw amino-acid sequence, 125 residues long: Dirigent protein 22 (125 aa).

N-linked (GlcNAc...) asparagine glycans are attached at residues Asn-8, Asn-30, and Asn-65.

It belongs to the plant dirigent protein family. Homodimer.

It localises to the secreted. The protein localises to the extracellular space. It is found in the apoplast. In terms of biological role, dirigent proteins impart stereoselectivity on the phenoxy radical-coupling reaction, yielding optically active lignans from two molecules of coniferyl alcohol in the biosynthesis of lignans, flavonolignans, and alkaloids and thus plays a central role in plant secondary metabolism. The polypeptide is Dirigent protein 22 (DIR22) (Arabidopsis thaliana (Mouse-ear cress)).